We begin with the raw amino-acid sequence, 252 residues long: 5-oxoprolinase subunit A (252 aa).

It belongs to the LamB/PxpA family. As to quaternary structure, forms a complex composed of PxpA, PxpB and PxpC.

It catalyses the reaction 5-oxo-L-proline + ATP + 2 H2O = L-glutamate + ADP + phosphate + H(+). In terms of biological role, catalyzes the cleavage of 5-oxoproline to form L-glutamate coupled to the hydrolysis of ATP to ADP and inorganic phosphate. This chain is 5-oxoprolinase subunit A, found in Photorhabdus laumondii subsp. laumondii (strain DSM 15139 / CIP 105565 / TT01) (Photorhabdus luminescens subsp. laumondii).